Consider the following 676-residue polypeptide: Envelope glycoprotein (676 aa).

The N-terminal stretch at 1–32 (MGASGILQLPRERFRKTSFFVWVIILFHKVFS) is a signal peptide. The Extracellular segment spans residues 33–650 (IPLGVVHNNT…GSNWWTGWKQ (618 aa)). N-linked (GlcNAc...) asparagine; by host glycosylation is present at asparagine 40. Disulfide bonds link cysteine 53-cysteine 609, cysteine 108-cysteine 135, cysteine 121-cysteine 147, cysteine 511-cysteine 556, and cysteine 601-cysteine 608. Residues 54 to 201 (RDKLSSTSQL…DFFQSPPLHE (148 aa)) form a receptor-binding region. N-linked (GlcNAc...) asparagine; by host glycans are attached at residues asparagine 204, asparagine 228, asparagine 257, asparagine 268, and asparagine 296. Residues 305 to 485 (ELSFVPVPET…LSGPGFLTNT (181 aa)) are mucin-like region. Residues 356–463 (IKGKDTMPTT…PTTLPEQHTA (108 aa)) are disordered. The span at 361-374 (TMPTTVTGVPTTTP) shows a compositional bias: low complexity. Polar residues predominate over residues 402 to 422 (TTQPAKTTSQPTNSTESTTLN). Asparagine 414 carries an N-linked (GlcNAc...) asparagine; by host glycan. Over residues 423 to 440 (PTSEPSSRGTGPSSPTVP) the composition is skewed to low complexity. N-linked (GlcNAc...) asparagine; by host glycosylation occurs at asparagine 441. The segment covering 452–463 (TTPTTLPEQHTA) has biased composition (polar residues). The interval 524 to 539 (GAAIGLAWIPYFGPAA) is fusion peptide. Residues 554–595 (LICGLRQLANETTQALQLFLRATTELRTFSILNRKAIDFLLQ) adopt a coiled-coil conformation. N-linked (GlcNAc...) asparagine; by host glycosylation occurs at asparagine 563. A coiled-coil region spans residues 615-634 (WTKNITDKIDQIIHDFVDNN). N-linked (GlcNAc...) asparagine; by host glycosylation occurs at asparagine 618. A helical transmembrane segment spans residues 651 to 671 (WVPAGIGITGVIIAIIALLCI). S-palmitoyl cysteine; by host attachment occurs at residues cysteine 670 and cysteine 672. Over 672-676 (CKFML) the chain is Cytoplasmic.

It belongs to the filoviruses glycoprotein family. Homotrimer; each monomer consists of a GP1 and a GP2 subunit linked by disulfide bonds. The resulting peplomers (GP1,2) protrude from the virus surface as spikes. GP1 and GP2delta are part of GP1,2delta soluble complexes released by ectodomain shedding. GP1,2 interacts with host integrin ITGAV/alpha-V and CLEC10A. Also binds human CD209 and CLEC4M (collectively referred to as DC-SIGN(R)), as well as human FOLR1. Interacts with host entry receptor NPC1. In terms of processing, the signal peptide region modulates GP's high mannose glycosylation, thereby determining the efficiency of the interactions with DC-SIGN(R). Post-translationally, N-glycosylated. O-glycosylated in the mucin-like region. In terms of processing, palmitoylation of GP2 is not required for its function. Post-translationally, specific enzymatic cleavages in vivo yield mature proteins. The precursor is processed into GP1 and GP2 by host cell furin in the trans Golgi, and maybe by other host proteases, to yield the mature GP1 and GP2 proteins. The cleavage site corresponds to the furin optimal cleavage sequence [KR]-X-[KR]-R. This cleavage does not seem to be required for function. After the internalization of the virus into cell endosomes, GP1 C-terminus is removed by the endosomal proteases cathepsin B, cathepsin L, or both, leaving a 19-kDa N-terminal fragment which is further digested by cathepsin B. Proteolytic processing of GP1,2 by host ADAM17 can remove the transmembrane anchor of GP2 and leads to shedding of complexes consisting in GP1 and truncated GP2 (GP1,2delta).

The protein resides in the virion membrane. It is found in the host cell membrane. The protein localises to the secreted. Its function is as follows. GP1 is responsible for binding to the receptor(s) on target cells. Interacts with CD209/DC-SIGN and CLEC4M/DC-SIGNR which act as cofactors for virus entry into the host cell. Binding to CD209 and CLEC4M, which are respectively found on dendritic cells (DCs), and on endothelial cells of liver sinusoids and lymph node sinuses, facilitate infection of macrophages and endothelial cells. These interactions not only facilitate virus cell entry, but also allow capture of viral particles by DCs and subsequent transmission to susceptible cells without DCs infection (trans infection). Binding to the macrophage specific lectin CLEC10A also seems to enhance virus infectivity. Interaction with FOLR1/folate receptor alpha may be a cofactor for virus entry in some cell types, although results are contradictory. Members of the Tyro3 receptor tyrosine kinase family also seem to be cell entry factors in filovirus infection. Once attached, the virions are internalized through clathrin-dependent endocytosis and/or macropinocytosis. After internalization of the virus into the endosomes of the host cell, proteolysis of GP1 by two cysteine proteases, CTSB/cathepsin B and CTSL/cathepsin L presumably induces a conformational change of GP2, unmasking its fusion peptide and initiating membranes fusion. GP2 acts as a class I viral fusion protein. Under the current model, the protein has at least 3 conformational states: pre-fusion native state, pre-hairpin intermediate state, and post-fusion hairpin state. During viral and target cell membrane fusion, the coiled coil regions (heptad repeats) assume a trimer-of-hairpins structure, positioning the fusion peptide in close proximity to the C-terminal region of the ectodomain. The formation of this structure appears to drive apposition and subsequent fusion of viral and target cell membranes. Responsible for penetration of the virus into the cell cytoplasm by mediating the fusion of the membrane of the endocytosed virus particle with the endosomal membrane. Low pH in endosomes induces an irreversible conformational change in GP2, releasing the fusion hydrophobic peptide. In terms of biological role, GP1,2 which is the disulfid-linked complex of GP1 and GP2, mediates endothelial cell activation and decreases endothelial barrier function. Mediates activation of primary macrophages. At terminal stages of the viral infection, when its expression is high, GP1,2 down-modulates the expression of various host cell surface molecules that are essential for immune surveillance and cell adhesion. Down-modulates integrins ITGA1, ITGA2, ITGA3, ITGA4, ITGA5, ITGA6, ITGAV and ITGB1. GP1,2 alters the cellular recycling of the dimer alpha-V/beta-3 via a dynamin-dependent pathway. Decrease in the host cell surface expression of various adhesion molecules may lead to cell detachment, contributing to the disruption of blood vessel integrity and hemorrhages developed during Ebola virus infection (cytotoxicity). This cytotoxicity appears late in the infection, only after the massive release of viral particles by infected cells. Down-modulation of host MHC-I, leading to altered recognition by immune cells, may explain the immune suppression and inflammatory dysfunction linked to Ebola infection. Also down-modulates EGFR surface expression. Counteracts the antiviral effect of host tetherin. Functionally, GP2delta is part of the complex GP1,2delta released by host ADAM17 metalloprotease. This secreted complex may play a role in the pathogenesis of the virus by efficiently blocking the neutralizing antibodies that would otherwise neutralize the virus surface glycoproteins GP1,2. Might therefore contribute to the lack of inflammatory reaction seen during infection in spite the of extensive necrosis and massive virus production. GP1,2delta does not seem to be involved in activation of primary macrophages. This is Envelope glycoprotein (GP) from Tai Forest ebolavirus (strain Cote d'Ivoire-94) (TAFV).